The chain runs to 314 residues: Aspartate carbamoyltransferase catalytic subunit (314 aa).

Carbamoyl phosphate contacts are provided by Arg-55 and Thr-56. Position 83 (Lys-83) interacts with L-aspartate. Carbamoyl phosphate-binding residues include Arg-105, His-139, and Gln-142. 2 residues coordinate L-aspartate: Arg-172 and Arg-226. The carbamoyl phosphate site is built by Gly-267 and Pro-268.

It belongs to the aspartate/ornithine carbamoyltransferase superfamily. ATCase family. Heterododecamer (2C3:3R2) of six catalytic PyrB chains organized as two trimers (C3), and six regulatory PyrI chains organized as three dimers (R2).

It catalyses the reaction carbamoyl phosphate + L-aspartate = N-carbamoyl-L-aspartate + phosphate + H(+). It functions in the pathway pyrimidine metabolism; UMP biosynthesis via de novo pathway; (S)-dihydroorotate from bicarbonate: step 2/3. Functionally, catalyzes the condensation of carbamoyl phosphate and aspartate to form carbamoyl aspartate and inorganic phosphate, the committed step in the de novo pyrimidine nucleotide biosynthesis pathway. This chain is Aspartate carbamoyltransferase catalytic subunit, found in Rhodococcus erythropolis (strain PR4 / NBRC 100887).